We begin with the raw amino-acid sequence, 503 residues long: Podocalyxin (503 aa).

The signal sequence occupies residues 1 to 21; it reads MPPTTALSALLLLLLSPASHS. The interval 19–236 is disordered; the sequence is SHSHNGNETS…PLTSQTPGIT (218 aa). Polar residues predominate over residues 20–50; that stretch reads HSHNGNETSTSAIKSSTVQSHQSATTSTEVT. Residues 22 to 404 are Extracellular-facing; sequence HNGNETSTSA…PPEVNEDRFS (383 aa). N-linked (GlcNAc...) asparagine glycans are attached at residues Asn25, Asn89, and Asn94. Residues 61–91 are compositionally biased toward low complexity; the sequence is STQPSNPTPFTTSTQSPSMPTSTPNPTSNQS. The span at 107-126 shows a compositional bias: low complexity; it reads TSSPSSTAFTSSSGQTASSG. Over residues 131-183 the composition is skewed to polar residues; sequence DSFTTAPTTTLGLINVSSQPTDLNTTSKLLSTPTTDNTTSPQQPVDSSPSTAS. Asn145, Asn154, Asn167, and Asn206 each carry an N-linked (GlcNAc...) asparagine glycan. Residues 196-208 show a composition bias toward low complexity; the sequence is SSSGSTPSTDNST. Residues 222–236 are compositionally biased toward polar residues; the sequence is SEATQPLTSQTPGIT. N-linked (GlcNAc...) asparagine glycosylation is present at Asn303. Residues 405–425 form a helical membrane-spanning segment; the sequence is LPLIITIVCMASFLLLVAALY. The Cytoplasmic portion of the chain corresponds to 426–503; the sequence is GCCHQRISQR…DLDEEEDTHL (78 aa). The residue at position 463 (Thr463) is a Phosphothreonine. Phosphoserine is present on Ser482. Thr501 carries the phosphothreonine modification.

The protein belongs to the podocalyxin family. Monomer; when associated with the membrane raft. Oligomer; when integrated in the apical membrane. Found in a complex with EZR, PODXL and NHERF2. Associates with the actin cytoskeleton through complex formation with EZR and NHERF2. Interacts (via the C-terminal PDZ-binding motif DTHL) with NHERF1 (via the PDZ domains); interaction is not detected in glomerular epithelium cells, take place early in the secretory pathway and is necessary for its apical membrane sorting. Interacts (via the C-terminal PDZ-binding motif DTHL) with NHERF2 (via the PDZ 1 domain); interaction is detected in glomerular epithelium cells. Interacts with EZR. Post-translationally, N- and O-linked glycosylated. Sialoglycoprotein. Expressed in liver cells and hematopoietic cells (at protein level). Glomerular epithelium cell (podocyte).

The protein localises to the apical cell membrane. Its subcellular location is the cell projection. It is found in the microvillus. The protein resides in the membrane raft. It localises to the lamellipodium. The protein localises to the filopodium. Its subcellular location is the ruffle. It is found in the membrane. Involved in the regulation of both adhesion and cell morphology and cancer progression. Functions as an anti-adhesive molecule that maintains an open filtration pathway between neighboring foot processes in the podocyte by charge repulsion. Acts as a pro-adhesive molecule, enhancing the adherence of cells to immobilized ligands, increasing the rate of migration and cell-cell contacts in an integrin-dependent manner. Induces the formation of apical actin-dependent microvilli. Involved in the formation of a preapical plasma membrane subdomain to set up initial epithelial polarization and the apical lumen formation during renal tubulogenesis. Plays a role in cancer development and aggressiveness by inducing cell migration and invasion through its interaction with the actin-binding protein EZR. Affects EZR-dependent signaling events, leading to increased activities of the MAPK and PI3K pathways in cancer cells. In Mus musculus (Mouse), this protein is Podocalyxin (Podxl).